The sequence spans 741 residues: Zinc finger protein 425 (741 aa).

The KRAB domain occupies 1–69 (DDVALYFSGQ…EQGCLDKTRR (69 aa)). Disordered stretches follow at residues 67–86 (TRRT…DTGK) and 128–169 (RRDT…TPGR). Positions 132 to 151 (FQSPSLQETEIPNKKVSITA) are enriched in polar residues. Residues 153 to 168 (DPDKKDLRHKPRETPG) show a composition bias toward basic and acidic residues. 19 consecutive C2H2-type zinc fingers follow at residues 179–201 (YSCY…KRSH), 235–257 (FQCS…QVVH), 263–285 (YPCP…LCLH), 291–313 (FCCG…LRLH), 319–341 (FQCP…LSQH), 347–369 (FHCP…QRTH), 375–397 (FSCD…IRVH), 403–425 (FSCP…GLQH), 431–453 (FQCP…QRLH), 459–481 (FPCA…TRVH), 487–509 (FPCG…LKVH), 515–537 (FSCA…TRLH), 543–565 (FQCP…QRMH), 571–593 (FACS…LRLH), 599–621 (YQCP…LLQH), 627–649 (FSCV…IRVH), 655–677 (FQCP…LYTH), 683–705 (FQCP…LCLH), and 711–733 (FSCD…IAVH).

It belongs to the krueppel C2H2-type zinc-finger protein family.

The protein localises to the nucleus. Its subcellular location is the cytoplasm. Acts as a transcriptional repressor. The protein is Zinc finger protein 425 (ZNF425) of Macaca fascicularis (Crab-eating macaque).